The primary structure comprises 608 residues: Probable cytosolic Fe-S cluster assembly factor SPAC806.02c (608 aa).

13–20 (GKGGVGKS) contacts ATP. Residues Cys-201 and Cys-204 each contribute to the [4Fe-4S] cluster site. 7 WD repeats span residues 288–327 (GHTG…LVHV), 331–371 (FHTR…WECT), 376–415 (GHEN…EFDC), 421–460 (EHTQ…WALT), 465–504 (GHTN…EDVA), 529–567 (IHKG…EALW), and 576–608 (AHGV…WSFK).

The protein in the N-terminal section; belongs to the Mrp/NBP35 ATP-binding proteins family. NUBP2/CFD1 subfamily. This sequence in the C-terminal section; belongs to the WD repeat CIA1 family. Heterotetramer of 2 nbp35 and 2 SPAC806.02c chains. It depends on [4Fe-4S] cluster as a cofactor.

It is found in the cytoplasm. The protein localises to the nucleus. Fusion protein of two essential components of the cytosolic iron-sulfur (Fe/S) protein assembly (CIA) machinery. Required for maturation of extramitochondrial Fe-S proteins. May form a heterotetramer with nubp35, functioning as a Fe-S scaffold complex, mediating the de novo assembly of an Fe-S cluster and its transfer to target apoproteins. This Schizosaccharomyces pombe (strain 972 / ATCC 24843) (Fission yeast) protein is Probable cytosolic Fe-S cluster assembly factor SPAC806.02c.